Consider the following 89-residue polypeptide: Small ribosomal subunit protein uS15 (89 aa).

Basic and acidic residues predominate over residues 1–21 (MSITAERKAEVIKDNARDKGD). The disordered stretch occupies residues 1 to 26 (MSITAERKAEVIKDNARDKGDTGSPE).

It belongs to the universal ribosomal protein uS15 family. Part of the 30S ribosomal subunit. Forms a bridge to the 50S subunit in the 70S ribosome, contacting the 23S rRNA.

In terms of biological role, one of the primary rRNA binding proteins, it binds directly to 16S rRNA where it helps nucleate assembly of the platform of the 30S subunit by binding and bridging several RNA helices of the 16S rRNA. Forms an intersubunit bridge (bridge B4) with the 23S rRNA of the 50S subunit in the ribosome. This chain is Small ribosomal subunit protein uS15, found in Sphingopyxis alaskensis (strain DSM 13593 / LMG 18877 / RB2256) (Sphingomonas alaskensis).